The following is a 509-amino-acid chain: Bifunctional purine biosynthesis protein PurH (509 aa).

One can recognise an MGS-like domain in the interval 1–144 (MKRALISVSD…KNYAAVTVVV (144 aa)).

It belongs to the PurH family.

It catalyses the reaction (6R)-10-formyltetrahydrofolate + 5-amino-1-(5-phospho-beta-D-ribosyl)imidazole-4-carboxamide = 5-formamido-1-(5-phospho-D-ribosyl)imidazole-4-carboxamide + (6S)-5,6,7,8-tetrahydrofolate. The catalysed reaction is IMP + H2O = 5-formamido-1-(5-phospho-D-ribosyl)imidazole-4-carboxamide. The protein operates within purine metabolism; IMP biosynthesis via de novo pathway; 5-formamido-1-(5-phospho-D-ribosyl)imidazole-4-carboxamide from 5-amino-1-(5-phospho-D-ribosyl)imidazole-4-carboxamide (10-formyl THF route): step 1/1. Its pathway is purine metabolism; IMP biosynthesis via de novo pathway; IMP from 5-formamido-1-(5-phospho-D-ribosyl)imidazole-4-carboxamide: step 1/1. This is Bifunctional purine biosynthesis protein PurH from Listeria monocytogenes serotype 4a (strain HCC23).